A 779-amino-acid polypeptide reads, in one-letter code: Ribonucleoside-diphosphate reductase large subunit (779 aa).

Residues Ser178, 193 to 194 (SC), Gly222, 420 to 424 (NLCIE), and 614 to 618 (PTATS) contribute to the substrate site. The cysteines at positions 194 and 440 are disulfide-linked. Residue Asn420 is the Proton acceptor of the active site. The Cysteine radical intermediate role is filled by Cys422. Glu424 serves as the catalytic Proton acceptor.

Belongs to the ribonucleoside diphosphate reductase large chain family. In terms of assembly, heterotetramer composed of a homodimer of the large subunit (R1) and a homodimer of the small subunit (R2). Larger multisubunit protein complex are also active, composed of (R1)n(R2)n.

The catalysed reaction is a 2'-deoxyribonucleoside 5'-diphosphate + [thioredoxin]-disulfide + H2O = a ribonucleoside 5'-diphosphate + [thioredoxin]-dithiol. Under complex allosteric control mediated by deoxynucleoside triphosphates and ATP binding. The type of nucleotide bound at the specificity site determines substrate preference. It seems probable that ATP makes the enzyme reduce CDP and UDP, dGTP favors ADP reduction and dTTP favors GDP reduction. Ribonucleoside-diphosphate reductase holoenzyme provides the precursors necessary for viral DNA synthesis. Allows virus growth in non-dividing cells. Catalyzes the biosynthesis of deoxyribonucleotides from the corresponding ribonucleotides. The protein is Ribonucleoside-diphosphate reductase large subunit of African swine fever virus (isolate Tick/Malawi/Lil 20-1/1983) (ASFV).